The primary structure comprises 414 residues: Alanine--glyoxylate aminotransferase (414 aa).

A mitochondrion-targeting transit peptide spans M1 to M23. At K231 the chain carries N6-(pyridoxal phosphate)lysine. K247 carries the N6-acetyllysine; alternate modification. K247 is modified (N6-succinyllysine; alternate). 2 positions are modified to N6-acetyllysine: K256 and K334. R382 contributes to the substrate binding site. A Microbody targeting signal motif is present at residues N412–L414.

It belongs to the class-V pyridoxal-phosphate-dependent aminotransferase family. Homodimer. The cofactor is pyridoxal 5'-phosphate.

The protein localises to the peroxisome. Its subcellular location is the mitochondrion matrix. It carries out the reaction L-serine + pyruvate = 3-hydroxypyruvate + L-alanine. The catalysed reaction is glyoxylate + L-alanine = glycine + pyruvate. Catalyzes the transamination of glyoxylate to glycine and contributes to the glyoxylate detoxification. Its function is as follows. Catalyzes the transamination between L-serine and pyruvate and weakly contributes to gluconeogenesis from the L-serine metabolism. This is Alanine--glyoxylate aminotransferase from Rattus norvegicus (Rat).